The primary structure comprises 84 residues: Toxin BmKaTx13 (84 aa).

Positions 1-19 are cleaved as a signal peptide; sequence MNYLVMISFALLLMKGVES. The LCN-type CS-alpha/beta domain occupies 21-83; it reads RDAYIAKPEN…VPIRVPGKCH (63 aa). 4 cysteine pairs are disulfide-bonded: Cys31-Cys82, Cys35-Cys55, Cys41-Cys65, and Cys45-Cys67. A propeptide (removed by a carboxypeptidase) is located at residue Arg84.

This sequence belongs to the long (4 C-C) scorpion toxin superfamily. Sodium channel inhibitor family. Alpha subfamily. As to expression, expressed by the venom gland.

It is found in the secreted. Its function is as follows. Alpha toxins bind voltage-independently at site-3 of sodium channels (Nav) and inhibit the inactivation of the activated channels, thereby blocking neuronal transmission. This toxin is active against mammals. This Olivierus martensii (Manchurian scorpion) protein is Toxin BmKaTx13.